The following is a 141-amino-acid chain: Endoribonuclease YbeY (141 aa).

Zn(2+) is bound by residues His-105, His-109, and Asp-115.

The protein belongs to the endoribonuclease YbeY family. It depends on Zn(2+) as a cofactor.

The protein localises to the cytoplasm. In terms of biological role, single strand-specific metallo-endoribonuclease involved in late-stage 70S ribosome quality control and in maturation of the 3' terminus of the 16S rRNA. In Chloroherpeton thalassium (strain ATCC 35110 / GB-78), this protein is Endoribonuclease YbeY.